The chain runs to 24 residues: Positive regulator of RepFIC repA1 expression (24 aa).

The polypeptide is Positive regulator of RepFIC repA1 expression (repL) (Escherichia coli (strain K12)).